We begin with the raw amino-acid sequence, 301 residues long: Ribosomal protein L11 methyltransferase (301 aa).

S-adenosyl-L-methionine is bound by residues Thr-147, Gly-168, Asp-190, and Asn-237.

The protein belongs to the methyltransferase superfamily. PrmA family.

The protein resides in the cytoplasm. The enzyme catalyses L-lysyl-[protein] + 3 S-adenosyl-L-methionine = N(6),N(6),N(6)-trimethyl-L-lysyl-[protein] + 3 S-adenosyl-L-homocysteine + 3 H(+). Functionally, methylates ribosomal protein L11. In Synechococcus sp. (strain RCC307), this protein is Ribosomal protein L11 methyltransferase.